The following is a 532-amino-acid chain: Collagen alpha-1(XXIII) chain (532 aa).

Residues 1–23 (MGAGERAAGGGGAQDPGAGCGSR) lie on the Cytoplasmic side of the membrane. The chain crosses the membrane as a helical; Signal-anchor for type II membrane protein span at residues 24–45 (ALSALCLLLSVGSAAACLLLGA). Over 46-532 (QAAALHGRVA…GLPVPGCWHK (487 aa)) the chain is Extracellular. Disordered stretches follow at residues 102-296 (PSEC…GEQG) and 308-532 (LDAL…CWHK). Collagen-like domains follow at residues 108–166 (PPGP…RGAQ), 173–232 (GPPG…PGKK), 240–298 (QPGL…QGDT), and 313–372 (GPPG…MGLS). Residues 129 to 145 (QSGRDGYPGPLGLDGKP) show a composition bias toward low complexity. A compositionally biased stretch (pro residues) spans 174 to 184 (PPGPPGPPGAR). A compositionally biased stretch (low complexity) spans 196–207 (RGAQGPAGPRGE). Positions 314–326 (PPGPQGAPGPPGI) are enriched in pro residues. 2 stretches are compositionally biased toward basic and acidic residues: residues 342 to 354 (DGEK…KGDP) and 380 to 393 (PKGE…DHLQ). Pro residues predominate over residues 403-414 (PGPPGPPGPPGP). 2 consecutive Collagen-like domains span residues 404-452 (GPPG…GPPG) and 455-514 (GLPG…PGLD). Basic and acidic residues-rich tracts occupy residues 427 to 441 (DGAK…ERGP) and 478 to 495 (RGEK…ERGV).

Homotrimer. In terms of processing, undergoes proteolytic cleavage by furin protease to yield a 60 kDa soluble form that forms a homotrimer and exhibits a low affinity interaction with heparin.

Its subcellular location is the cell membrane. This is Collagen alpha-1(XXIII) chain (Col23a1) from Mus musculus (Mouse).